The chain runs to 129 residues: Cytochrome c oxidase subunit 5B, mitochondrial (129 aa).

The N-terminal 31 residues, 1–31 (MASRLLRGAGTLAAQALRARGPSGAAAMRSM), are a transit peptide targeting the mitochondrion. An N6-acetyllysine mark is found at Lys-68 and Lys-86. Residues Cys-91, Cys-93, Cys-113, and Cys-116 each coordinate Zn(2+). Position 121 is an N6-acetyllysine (Lys-121).

Belongs to the cytochrome c oxidase subunit 5B family. Component of the cytochrome c oxidase (complex IV, CIV), a multisubunit enzyme composed of 14 subunits. The complex is composed of a catalytic core of 3 subunits MT-CO1, MT-CO2 and MT-CO3, encoded in the mitochondrial DNA, and 11 supernumerary subunits COX4I1 (or COX4I2), COX5A, COX5B, COX6A1 (or COX6A2), COX6B1 (or COX6B2), COX6C, COX7A2 (or COX7A1), COX7B, COX7C, COX8A and NDUFA4, which are encoded in the nuclear genome. The complex exists as a monomer or a dimer and forms supercomplexes (SCs) in the inner mitochondrial membrane with NADH-ubiquinone oxidoreductase (complex I, CI) and ubiquinol-cytochrome c oxidoreductase (cytochrome b-c1 complex, complex III, CIII), resulting in different assemblies (supercomplex SCI(1)III(2)IV(1) and megacomplex MCI(2)III(2)IV(2)).

It is found in the mitochondrion inner membrane. It functions in the pathway energy metabolism; oxidative phosphorylation. Its function is as follows. Component of the cytochrome c oxidase, the last enzyme in the mitochondrial electron transport chain which drives oxidative phosphorylation. The respiratory chain contains 3 multisubunit complexes succinate dehydrogenase (complex II, CII), ubiquinol-cytochrome c oxidoreductase (cytochrome b-c1 complex, complex III, CIII) and cytochrome c oxidase (complex IV, CIV), that cooperate to transfer electrons derived from NADH and succinate to molecular oxygen, creating an electrochemical gradient over the inner membrane that drives transmembrane transport and the ATP synthase. Cytochrome c oxidase is the component of the respiratory chain that catalyzes the reduction of oxygen to water. Electrons originating from reduced cytochrome c in the intermembrane space (IMS) are transferred via the dinuclear copper A center (CU(A)) of subunit 2 and heme A of subunit 1 to the active site in subunit 1, a binuclear center (BNC) formed by heme A3 and copper B (CU(B)). The BNC reduces molecular oxygen to 2 water molecules using 4 electrons from cytochrome c in the IMS and 4 protons from the mitochondrial matrix. The chain is Cytochrome c oxidase subunit 5B, mitochondrial (COX5B) from Homo sapiens (Human).